A 301-amino-acid polypeptide reads, in one-letter code: MTATFIKTSRGKSPASLSSVGDYVQLLKPRIMCLVVFTAITGMLIAPGTIHPLIGLVSTVCVALGAGAAGAFNMWYDSDIDAIMDRTKGRPIPAGKICREQAWECGMVLATLSVFVMAIAVNYVSALLLAGSIFSYAVVYTMLLKRRTPQNIVIGGIAGAFPPVIGWASVSGTLSLESLSLFAIIFVWTPPHFWAIALLTLEEYKKANVPMLPVYCIRKTRSHILLYSIILAVVGATPGLFVKHPVLYEILATGLSATFIAYAIAVFREKGQPSHKACMGLFKYSIYYLFLLFAVVIACVH.

9 helical membrane passes run 34–54, 55–75, 102–121, 125–144, 152–172, 181–201, 222–242, 247–267, and 280–300; these read LVVF…HPLI, GLVS…FNMW, AWEC…AIAV, SALL…TMLL, IVIG…SVSG, LFAI…LLTL, SHIL…GLFV, LYEI…IAVF, and GLFK…IACV.

It belongs to the UbiA prenyltransferase family. Protoheme IX farnesyltransferase subfamily.

The protein localises to the cell inner membrane. It catalyses the reaction heme b + (2E,6E)-farnesyl diphosphate + H2O = Fe(II)-heme o + diphosphate. The protein operates within porphyrin-containing compound metabolism; heme O biosynthesis; heme O from protoheme: step 1/1. In terms of biological role, converts heme B (protoheme IX) to heme O by substitution of the vinyl group on carbon 2 of heme B porphyrin ring with a hydroxyethyl farnesyl side group. The polypeptide is Protoheme IX farnesyltransferase (Anaplasma marginale (strain Florida)).